A 103-amino-acid chain; its full sequence is MYAVFQSGGKQHRVSEGQTIRLEKLDIATGETIEFDQVLMIANGEEINIGAPLVDGGKIKAEIIAHGRGEKIKIVKFRRRKHYRKQQGHRQWFTDVKITGISA.

Belongs to the bacterial ribosomal protein bL21 family. In terms of assembly, part of the 50S ribosomal subunit. Contacts protein L20.

This protein binds to 23S rRNA in the presence of protein L20. This Yersinia pseudotuberculosis serotype O:1b (strain IP 31758) protein is Large ribosomal subunit protein bL21.